Consider the following 277-residue polypeptide: Caspase-3 (277 aa).

Met-1 carries the post-translational modification N-acetylmethionine. 2 propeptides span residues Met-1–Asp-9 and Ser-10–Asp-28. Position 11 is an N6-acetyllysine (Lys-11). Position 26 is a phosphoserine (Ser-26). Residues His-121 and Cys-163 contribute to the active site. At Cys-163 the chain carries S-nitrosocysteine; in inhibited form. A (Microbial infection) ADP-riboxanated arginine modification is found at Arg-207.

This sequence belongs to the peptidase C14A family. As to quaternary structure, heterotetramer that consists of two anti-parallel arranged heterodimers, each one formed by a 17 kDa (p17) and a 12 kDa (p12) subunit. Interacts with BIRC6/bruce. Post-translationally, cleavage by granzyme B, caspase-6, caspase-8 and caspase-10 generates the two active subunits. Additional processing of the propeptides is likely due to the autocatalytic activity of the activated protease. Active heterodimers between the small subunit of caspase-7 protease and the large subunit of caspase-3 also occur and vice versa. S-nitrosylated on its catalytic site cysteine in unstimulated human cell lines and denitrosylated upon activation of the Fas apoptotic pathway, associated with an increase in intracellular caspase activity. Fas therefore activates caspase-3 not only by inducing the cleavage of the caspase zymogen to its active subunits, but also by stimulating the denitrosylation of its active site thiol. In terms of processing, ubiquitinated by BIRC6; this activity is inhibited by DIABLO/SMAC. Post-translationally, (Microbial infection) ADP-riboxanation by C.violaceum CopC blocks CASP3 processing, preventing CASP3 activation and ability to recognize and cleave substrates. In terms of tissue distribution, highly expressed in lung, spleen, heart, liver and kidney. Moderate levels in brain and skeletal muscle, and low in testis. Also found in many cell lines, highest expression in cells of the immune system.

It localises to the cytoplasm. It carries out the reaction Strict requirement for an Asp residue at positions P1 and P4. It has a preferred cleavage sequence of Asp-Xaa-Xaa-Asp-|- with a hydrophobic amino-acid residue at P2 and a hydrophilic amino-acid residue at P3, although Val or Ala are also accepted at this position.. Inhibited by isatin sulfonamides. Inhibited by BIRC6; following inhibition of BIRC6-caspase binding by DIABLO/SMAC, BIRC6 is subjected to caspase cleavage, leading to an increase in active caspases. In terms of biological role, thiol protease that acts as a major effector caspase involved in the execution phase of apoptosis. Following cleavage and activation by initiator caspases (CASP8, CASP9 and/or CASP10), mediates execution of apoptosis by catalyzing cleavage of many proteins. At the onset of apoptosis, it proteolytically cleaves poly(ADP-ribose) polymerase PARP1 at a '216-Asp-|-Gly-217' bond. Cleaves and activates sterol regulatory element binding proteins (SREBPs) between the basic helix-loop-helix leucine zipper domain and the membrane attachment domain. Cleaves and activates caspase-6, -7 and -9 (CASP6, CASP7 and CASP9, respectively). Cleaves and inactivates interleukin-18 (IL18). Involved in the cleavage of huntingtin. Triggers cell adhesion in sympathetic neurons through RET cleavage. Cleaves and inhibits serine/threonine-protein kinase AKT1 in response to oxidative stress. Acts as an inhibitor of type I interferon production during virus-induced apoptosis by mediating cleavage of antiviral proteins CGAS, IRF3 and MAVS, thereby preventing cytokine overproduction. Also involved in pyroptosis by mediating cleavage and activation of gasdermin-E (GSDME). Cleaves XRCC4 and phospholipid scramblase proteins XKR4, XKR8 and XKR9, leading to promote phosphatidylserine exposure on apoptotic cell surface. Cleaves BIRC6 following inhibition of BIRC6-caspase binding by DIABLO/SMAC. In Homo sapiens (Human), this protein is Caspase-3 (CASP3).